A 175-amino-acid polypeptide reads, in one-letter code: MLDLGLSKMALIGVVALVVLGPERLPRVARTAGALFGRAQRYINDVKAEVSREIELDALRTMKTDFEQAARNVENTIHDNLREHERDLNAAWNSAVSPGGSAAADAPDGPSAASGEPSWRSIAAAPAKRRNWRVKKAVTPVWYKRATMRRTQVQSGAARVARHRPASLRRPARFL.

The helical transmembrane segment at 1–21 (MLDLGLSKMALIGVVALVVLG) threads the bilayer. Positions 96 to 115 (VSPGGSAAADAPDGPSAASG) are enriched in low complexity. Disordered regions lie at residues 96–119 (VSPGGSAAADAPDGPSAASGEPSW) and 152–175 (QVQSGAARVARHRPASLRRPARFL). Residues 160 to 175 (VARHRPASLRRPARFL) show a composition bias toward basic residues.

It belongs to the TatB family. In terms of assembly, the Tat system comprises two distinct complexes: a TatABC complex, containing multiple copies of TatA, TatB and TatC subunits, and a separate TatA complex, containing only TatA subunits. Substrates initially bind to the TatABC complex, which probably triggers association of the separate TatA complex to form the active translocon.

It is found in the cell inner membrane. Functionally, part of the twin-arginine translocation (Tat) system that transports large folded proteins containing a characteristic twin-arginine motif in their signal peptide across membranes. Together with TatC, TatB is part of a receptor directly interacting with Tat signal peptides. TatB may form an oligomeric binding site that transiently accommodates folded Tat precursor proteins before their translocation. This chain is Sec-independent protein translocase protein TatB, found in Burkholderia pseudomallei (strain 1710b).